The following is a 248-amino-acid chain: Pyridoxine 5'-phosphate synthase (248 aa).

Asparagine 7 is a 3-amino-2-oxopropyl phosphate binding site. 9-10 serves as a coordination point for 1-deoxy-D-xylulose 5-phosphate; sequence DH. Residue arginine 18 participates in 3-amino-2-oxopropyl phosphate binding. Histidine 43 acts as the Proton acceptor in catalysis. Residues arginine 45 and histidine 50 each contribute to the 1-deoxy-D-xylulose 5-phosphate site. Glutamate 70 serves as the catalytic Proton acceptor. Threonine 100 contributes to the 1-deoxy-D-xylulose 5-phosphate binding site. Histidine 191 serves as the catalytic Proton donor. 3-amino-2-oxopropyl phosphate is bound by residues glycine 192 and 213–214; that span reads GH.

It belongs to the PNP synthase family. As to quaternary structure, homooctamer; tetramer of dimers.

The protein localises to the cytoplasm. The enzyme catalyses 3-amino-2-oxopropyl phosphate + 1-deoxy-D-xylulose 5-phosphate = pyridoxine 5'-phosphate + phosphate + 2 H2O + H(+). It participates in cofactor biosynthesis; pyridoxine 5'-phosphate biosynthesis; pyridoxine 5'-phosphate from D-erythrose 4-phosphate: step 5/5. In terms of biological role, catalyzes the complicated ring closure reaction between the two acyclic compounds 1-deoxy-D-xylulose-5-phosphate (DXP) and 3-amino-2-oxopropyl phosphate (1-amino-acetone-3-phosphate or AAP) to form pyridoxine 5'-phosphate (PNP) and inorganic phosphate. This chain is Pyridoxine 5'-phosphate synthase, found in Bordetella bronchiseptica (strain ATCC BAA-588 / NCTC 13252 / RB50) (Alcaligenes bronchisepticus).